The primary structure comprises 184 residues: Cell division protein ZapC (184 aa).

The protein belongs to the ZapC family. In terms of assembly, interacts directly with FtsZ.

It localises to the cytoplasm. In terms of biological role, contributes to the efficiency of the cell division process by stabilizing the polymeric form of the cell division protein FtsZ. Acts by promoting interactions between FtsZ protofilaments and suppressing the GTPase activity of FtsZ. This chain is Cell division protein ZapC, found in Idiomarina loihiensis (strain ATCC BAA-735 / DSM 15497 / L2-TR).